The chain runs to 541 residues: MCSISGIIVKDNQISAKYSIDMMKILKHRGRDNSGLLLDDEVIYFNDFEDVEDLEEEMIGNLSLAHNRLAIVGRYGVQPIPNEDETIWLVCNGEIYNYIELREYLKQNHEFRTDSDNEVIIHLYEEEKLEELDGDYAFAIYDKSKNVVRLARDMFGVKPLFYVDRDKYFAFASERKALWHLLINIDGCERDLDELNSKIKTLKPNSQLIYYLDDNRFEIIEGFKKLELNYMKERSYEEAKEYLDRALKNSVLKRVRGLDKVGIICSGGVDSSLIAKLASLYCEVILYAVGTENSEDLIYAERLAKDLNLKLRKKIISEEEYEEYVFKVAKAIDEVDLMKIGVGIPIYVASEMANEDGLKVVLSGQGADELFGGYARHERIYRERGEEELKKELLKDVYNLYKVNLERDDHCTMANGVELRVPFLDEEVVEIALSIPIEYKMSELSNRPYAESNISLKSEPINGLKNTNLNIKCVRSVRKKILRDVASQYLPDYIAYRPKKAAQYGSGGEKMIYKVAKKYGFSKKRINEFLDMLKRKIVSEF.

Cys-2 functions as the For GATase activity in the catalytic mechanism. The region spanning 2 to 213 is the Glutamine amidotransferase type-2 domain; that stretch reads CSISGIIVKD…PNSQLIYYLD (212 aa). L-glutamine-binding positions include 68 to 72, 92 to 94, and Asp-116; these read RLAIV and NGE. ATP-binding positions include Val-289 and 363–364; that span reads SG.

This sequence belongs to the asparagine synthetase family.

It carries out the reaction L-aspartate + L-glutamine + ATP + H2O = L-asparagine + L-glutamate + AMP + diphosphate + H(+). It participates in amino-acid biosynthesis; L-asparagine biosynthesis; L-asparagine from L-aspartate (L-Gln route): step 1/1. The protein is Putative asparagine synthetase [glutamine-hydrolyzing] 1 of Methanocaldococcus jannaschii (strain ATCC 43067 / DSM 2661 / JAL-1 / JCM 10045 / NBRC 100440) (Methanococcus jannaschii).